Consider the following 446-residue polypeptide: Palmitoyltransferase PFA4 (446 aa).

The Cytoplasmic portion of the chain corresponds to 1–8 (MAVQLKWP). The chain crosses the membrane as a helical span at residues 9-29 (ILGVIIPCIIIFSLSYGSHYF). Residues 30–40 (ILRHHLTMKQQ) lie on the Lumenal side of the membrane. Residues 41–61 (LIYEFYVTMIWISYLLAIYTN) form a helical membrane-spanning segment. The Cytoplasmic portion of the chain corresponds to 62–161 (PGRVPKNYKP…GNNNLPHFMR (100 aa)). One can recognise a DHHC domain in the interval 114-164 (RYCKKCNNYKPPRSHHCKICQQCVLQMDHHCPWTLNCVGNNNLPHFMRFLG). Cys-144 functions as the S-palmitoyl cysteine intermediate in the catalytic mechanism. Residues 162–182 (FLGWIIWGTGYLMIQLIKLII) form a helical membrane-spanning segment. Residues 183–201 (NYYENSNMPHYLFNKTELV) are Lumenal-facing. Residues 202-222 (AIIAITPLNFFVFASILVLFI) form a helical membrane-spanning segment. Topologically, residues 223-446 (RCLINICKGM…TDFGVDEDSD (224 aa)) are cytoplasmic.

The protein belongs to the DHHC palmitoyltransferase family. PFA4 subfamily.

It is found in the endoplasmic reticulum membrane. The catalysed reaction is L-cysteinyl-[protein] + hexadecanoyl-CoA = S-hexadecanoyl-L-cysteinyl-[protein] + CoA. Its function is as follows. Mediates the reversible addition of palmitate to target proteins, thereby regulating their membrane association and biological function. In Candida albicans (strain SC5314 / ATCC MYA-2876) (Yeast), this protein is Palmitoyltransferase PFA4.